Reading from the N-terminus, the 137-residue chain is Partner of bursicon (137 aa).

Residues 1–24 (MNIMITKIFFLVQLFYIVVSKSSA) form the signal peptide. Cystine bridges form between C28/C86, C52/C101, C61/C127, C65/C129, and C83/C132. One can recognise a CTCK domain in the interval 28–123 (CETVASEVHV…NALMEVRLRE (96 aa)).

Heterodimer of burs and pburs.

Its subcellular location is the secreted. Functionally, final heterodimeric neurohormone released at the end of the molting cycle, involved in the sclerotization (tanning) of the insect cuticle, melanization and wing spreading. This chain is Partner of bursicon, found in Bombyx mori (Silk moth).